The following is a 630-amino-acid chain: Molybdenum cofactor biosynthesis protein 1 (630 aa).

One can recognise a Radical SAM core domain in the interval 61 to 298 (RFNRHHTYLR…SKTYHVPGFK (238 aa)). Arg-70 lines the GTP pocket. [4Fe-4S] cluster is bound by residues Cys-77 and Cys-81. Residue Tyr-83 participates in S-adenosyl-L-methionine binding. Cys-84 provides a ligand contact to [4Fe-4S] cluster. Arg-120 contributes to the GTP binding site. Residue Gly-124 participates in S-adenosyl-L-methionine binding. Thr-151 is a binding site for GTP. Ser-175 serves as a coordination point for S-adenosyl-L-methionine. Lys-212 contacts GTP. Met-246 provides a ligand contact to S-adenosyl-L-methionine. [4Fe-4S] cluster is bound by residues Cys-312 and Cys-315. Position 317 to 319 (317 to 319 (RLR)) interacts with GTP. Cys-329 provides a ligand contact to [4Fe-4S] cluster. Residues 402–629 (KEVKNYLLKL…GGKSSSPQIT (228 aa)) are molybdenum cofactor biosynthesis protein C. Asp-599 functions as the For molybdenum cofactor biosynthesis protein C activity in the catalytic mechanism.

The protein in the C-terminal section; belongs to the MoaC family. This sequence in the N-terminal section; belongs to the radical SAM superfamily. MoaA family. Isoform mocs1a and isoform mocs1b probably form a heterooligomer. [4Fe-4S] cluster is required as a cofactor.

It carries out the reaction GTP + AH2 + S-adenosyl-L-methionine = (8S)-3',8-cyclo-7,8-dihydroguanosine 5'-triphosphate + 5'-deoxyadenosine + L-methionine + A + H(+). The catalysed reaction is (8S)-3',8-cyclo-7,8-dihydroguanosine 5'-triphosphate = cyclic pyranopterin phosphate + diphosphate. It functions in the pathway cofactor biosynthesis; molybdopterin biosynthesis. In terms of biological role, isoform mocs1a and isoform mocs1b probably form a complex that catalyzes the conversion of 5'-GTP to cyclic pyranopterin monophosphate (cPMP). mocs1a catalyzes the cyclization of GTP to (8S)-3',8-cyclo-7,8-dihydroguanosine 5'-triphosphate and mocs1b catalyzes the subsequent conversion of (8S)-3',8-cyclo-7,8-dihydroguanosine 5'-triphosphate to cPMP. This chain is Molybdenum cofactor biosynthesis protein 1 (mocs1), found in Dictyostelium discoideum (Social amoeba).